The sequence spans 332 residues: Malate dehydrogenase, cytoplasmic (332 aa).

NAD(+) is bound by residues 11–17 (GAAGQIA) and Asp42. Positions 92 and 98 each coordinate substrate. Residues Asn105, Gln112, and 129–131 (VGN) contribute to the NAD(+) site. Substrate contacts are provided by Asn131 and Arg162. The active-site Proton acceptor is the His187.

The protein belongs to the LDH/MDH superfamily. MDH type 2 family. Homodimer.

The protein localises to the cytoplasm. The enzyme catalyses (S)-malate + NAD(+) = oxaloacetate + NADH + H(+). Its activity is regulated as follows. By arsenate for both the forward and reverse reactions. Malate dehydrogenase. Has no activity with NADPH as substrate. Does not show lactate dehydrogenase activity. The sequence is that of Malate dehydrogenase, cytoplasmic from Taenia solium (Pork tapeworm).